Reading from the N-terminus, the 131-residue chain is Sulfurtransferase TusD (131 aa).

The Cysteine persulfide intermediate role is filled by Cys81.

This sequence belongs to the DsrE/TusD family. In terms of assembly, heterohexamer, formed by a dimer of trimers. The hexameric TusBCD complex contains 2 copies each of TusB, TusC and TusD. The TusBCD complex interacts with TusE.

It is found in the cytoplasm. Its function is as follows. Part of a sulfur-relay system required for 2-thiolation of 5-methylaminomethyl-2-thiouridine (mnm(5)s(2)U) at tRNA wobble positions. Accepts sulfur from TusA and transfers it in turn to TusE. This chain is Sulfurtransferase TusD, found in Yersinia pseudotuberculosis serotype O:1b (strain IP 31758).